A 149-amino-acid chain; its full sequence is Protein OPG200 (149 aa).

Belongs to the orthopoxvirus OPG200 family. As to quaternary structure, homodimers. Interacts with host IKBKB; this interaction inhibits host NF-kappa-B activation.

Functionally, contributes to virulence by binding to the host IKBKB subunit of the IKK complex and preventing host NF-kappa-B activation in response to pro-inflammatory stimuli such as TNF-alpha or IL1B. Mechanistically, sterically hinders the direct contact between the kinase domains of IKBKB in the IKK complex containing IKBKB, CHUK/IKKA and NEMO. This chain is Protein OPG200 (OPG200), found in Vaccinia virus (strain Western Reserve) (VACV).